Here is a 274-residue protein sequence, read N- to C-terminus: Non-homologous end joining protein Ku (274 aa).

The Ku domain occupies 11 to 195 (ITFGLVNVPV…KYKITPKELS (185 aa)).

This sequence belongs to the prokaryotic Ku family. As to quaternary structure, homodimer. Interacts with LigD.

With LigD forms a non-homologous end joining (NHEJ) DNA repair enzyme, which repairs dsDNA breaks with reduced fidelity. Binds linear dsDNA with 5'- and 3'- overhangs but not closed circular dsDNA nor ssDNA. Recruits and stimulates the ligase activity of LigD. The chain is Non-homologous end joining protein Ku from Coxiella burnetii (strain RSA 331 / Henzerling II).